The sequence spans 137 residues: MPRHNKKDSTSGASQRQLRVAETVRHAIADILAQGHVHDPVLEGHLITVPEVRMSADLKLATIYVMPLGGRDTTDVIDALDHNRKFLRGEIARRVNLKFAPDIRFRADERFDEAERIEKLLRTPAVQRDLAPDSDES.

The protein belongs to the RbfA family. Monomer. Binds 30S ribosomal subunits, but not 50S ribosomal subunits or 70S ribosomes.

The protein resides in the cytoplasm. In terms of biological role, one of several proteins that assist in the late maturation steps of the functional core of the 30S ribosomal subunit. Associates with free 30S ribosomal subunits (but not with 30S subunits that are part of 70S ribosomes or polysomes). Required for efficient processing of 16S rRNA. May interact with the 5'-terminal helix region of 16S rRNA. The sequence is that of Ribosome-binding factor A from Nitrobacter hamburgensis (strain DSM 10229 / NCIMB 13809 / X14).